A 148-amino-acid polypeptide reads, in one-letter code: 3-dehydroquinate dehydratase (148 aa).

The active-site Proton acceptor is Y23. 3 residues coordinate substrate: N74, H80, and D87. Residue H100 is the Proton donor of the active site. Substrate contacts are provided by residues I101–S102 and R111.

It belongs to the type-II 3-dehydroquinase family. As to quaternary structure, homododecamer.

The enzyme catalyses 3-dehydroquinate = 3-dehydroshikimate + H2O. Its pathway is metabolic intermediate biosynthesis; chorismate biosynthesis; chorismate from D-erythrose 4-phosphate and phosphoenolpyruvate: step 3/7. Catalyzes a trans-dehydration via an enolate intermediate. The chain is 3-dehydroquinate dehydratase from Anoxybacillus flavithermus (strain DSM 21510 / WK1).